Reading from the N-terminus, the 132-residue chain is Protein LH2 (132 aa).

The polypeptide is Protein LH2 (Pantherophis guttatus (Corn snake)).